Reading from the N-terminus, the 564-residue chain is O-fucosyltransferase 5 (564 aa).

Positions 1-28 are disordered; it reads MVRNSSDEEEDHRNLIPQNDTRDNDLNL. Residues 70 to 90 form a helical; Signal-anchor for type II membrane protein membrane-spanning segment; it reads YVVAAVSLTLFVGLLFLFTDT. N-linked (GlcNAc...) asparagine glycans are attached at residues Asn129, Asn134, and Asn174. Substrate is bound by residues 413–415 and 529–530; these read HLR and TF.

The protein belongs to the glycosyltransferase GT106 family.

The protein resides in the membrane. Its pathway is glycan metabolism. This chain is O-fucosyltransferase 5, found in Arabidopsis thaliana (Mouse-ear cress).